Reading from the N-terminus, the 185-residue chain is Signal peptidase I P (185 aa).

Residues 1–14 (MFDKEKRKKSNIID) are Cytoplasmic-facing. A helical transmembrane segment spans residues 15–34 (WIKAILIALILVFLVRTFLF). At 35 to 185 (EPYIVQGESM…FPLDRIRHAK (151 aa)) the chain is on the extracellular side. Residues S43 and K85 contribute to the active site.

This sequence belongs to the peptidase S26 family.

The protein resides in the cell membrane. It carries out the reaction Cleavage of hydrophobic, N-terminal signal or leader sequences from secreted and periplasmic proteins.. The polypeptide is Signal peptidase I P (sipP) (Bacillus subtilis subsp. natto).